Reading from the N-terminus, the 63-residue chain is uncharacterized protein (63 aa).

A helical transmembrane segment spans residues 38–58 (ISLFIILHLCLLVCLLLSFYF).

The protein resides in the membrane. This is an uncharacterized protein from Saccharomyces cerevisiae (strain ATCC 204508 / S288c) (Baker's yeast).